The following is a 256-amino-acid chain: Bialaphos biosynthetic pathway regulatory protein (256 aa).

The HTH luxR-type domain occupies 184 to 249; the sequence is ETADAIDVSD…QLGARAAECR (66 aa). The H-T-H motif DNA-binding region spans 208 to 227; it reads DVAMARSLGISTRTLRRVIT.

Involved in the regulation of the biosynthesis of phosphinothricin tripeptide (PTT), also known as bialaphos (BA), a natural-product antibiotic and potent herbicide. The sequence is that of Bialaphos biosynthetic pathway regulatory protein (brpA) from Streptomyces hygroscopicus.